Consider the following 646-residue polypeptide: Acetyl-coenzyme A synthetase (646 aa).

CoA is bound by residues Arg-190 to Asn-193 and Thr-309. ATP contacts are provided by residues Gly-385–Pro-387, Asp-409–Thr-414, Asp-498, and Arg-513. Residue Ser-521 participates in CoA binding. Arg-524 contacts ATP. Positions 535, 537, and 540 each coordinate Mg(2+). Arg-582 is a binding site for CoA. Lys-607 is subject to N6-acetyllysine.

Belongs to the ATP-dependent AMP-binding enzyme family. Mg(2+) serves as cofactor. Acetylated. Deacetylation by the SIR2-homolog deacetylase activates the enzyme.

The enzyme catalyses acetate + ATP + CoA = acetyl-CoA + AMP + diphosphate. In terms of biological role, catalyzes the conversion of acetate into acetyl-CoA (AcCoA), an essential intermediate at the junction of anabolic and catabolic pathways. AcsA undergoes a two-step reaction. In the first half reaction, AcsA combines acetate with ATP to form acetyl-adenylate (AcAMP) intermediate. In the second half reaction, it can then transfer the acetyl group from AcAMP to the sulfhydryl group of CoA, forming the product AcCoA. This is Acetyl-coenzyme A synthetase from Pseudoalteromonas translucida (strain TAC 125).